We begin with the raw amino-acid sequence, 392 residues long: Speckle-type POZ protein-like (392 aa).

An MATH domain is found at 31-161 (KFSYMWTINN…DDKLTLFCEV (131 aa)). A BTB domain is found at 200-267 (TDCCFFVRGK…VYTGKAPNLD (68 aa)).

Belongs to the Tdpoz family. In terms of assembly, homodimer. Heterodimer with SPOP. Component of cullin-RING-based BCR (BTB-CUL3-RBX1) E3 ubiquitin-protein ligase complexes containing homodimeric SPOPL or the heterodimer formed by SPOP and SPOPL. Interacts with CUL3 and MACROH2A1.

It localises to the nucleus. It functions in the pathway protein modification; protein ubiquitination. In terms of biological role, component of a cullin-RING-based BCR (BTB-CUL3-RBX1) E3 ubiquitin-protein ligase complex that mediates the ubiquitination and subsequent proteasomal degradation of target proteins, but with relatively low efficiency. Cullin-RING-based BCR (BTB-CUL3-RBX1) E3 ubiquitin-protein ligase complexes containing homodimeric SPOPL or the heterodimer formed by SPOP and SPOPL are less efficient than ubiquitin ligase complexes containing only SPOP. May function to down-regulate the activity of cullin-RING-based BCR (BTB-CUL3-RBX1) E3 ubiquitin-protein ligase complexes that contain SPOP. This Mus musculus (Mouse) protein is Speckle-type POZ protein-like (Spopl).